The primary structure comprises 601 residues: MESITFGVLTISDTCWQEPEKDTSGPILRQLIGETFANTQVIGNIVPDEKDIIQQELRKWIDREELRVILTTGGTGFAPRDVTPEATRQLLEKECPQLSMYITLESIKQTQYAALSRGLCGIAGNTLILNLPGSEKAVKECFQTISALLPHAVHLIGDDVSLVRKTHAEVQGSAQKSHICPHKTGTGTDSDRNSPYPMLPVQEVLSIIFNTVQKTANLNKILLEMNAPVNIPPFRASIKDGYAMKSTGFSGTKRVLGCIAAGDSPNSLPLAEDECYKINTGAPLPLEADCVVQVEDTKLLQLDKNGQESLVDILVEPQAGLDVRPVGYDLSTNDRIFPALDPSPVVVKSLLASVGNRLILSKPKVAIVSTGSELCSPRNQLTPGKIFDSNTTMLTELLVYFGFNCMHTCVLSDSFQRTKESLLELFEVVDFVICSGGVSMGDKDFVKSVLEDLQFRIHCGRVNIKPGKPMTFASRKDKYFFGLPGNPVSAFVTFHLFALPAIRFAAGWDRCKCSLSVLNVKLLNDFSLDSRPEFVRASVISKSGELYASVNGNQISSRLQSIVGADVLINLPARTSDRPLAKAGEIFPASVLRFDFISKYE.

An MPT adenylyltransferase region spans residues 3 to 153 (SITFGVLTIS…TISALLPHAV (151 aa)). The segment at 173 to 195 (SAQKSHICPHKTGTGTDSDRNSP) is disordered. The segment at 184 to 596 (TGTGTDSDRN…FPASVLRFDF (413 aa)) is MPT Mo-transferase. Serine 376 bears the Phosphoserine mark.

In the N-terminal section; belongs to the MoaB/Mog family. It in the C-terminal section; belongs to the MoeA family. Mg(2+) serves as cofactor.

The catalysed reaction is molybdopterin + ATP + H(+) = adenylyl-molybdopterin + diphosphate. The enzyme catalyses adenylyl-molybdopterin + molybdate = Mo-molybdopterin + AMP + H(+). It functions in the pathway cofactor biosynthesis; molybdopterin biosynthesis. Its function is as follows. Catalyzes two steps in the biosynthesis of the molybdenum cofactor. In the first step, molybdopterin is adenylated. Subsequently, molybdate is inserted into adenylated molybdopterin and AMP is released. This chain is Molybdenum cofactor synthesis protein cinnamon (cin), found in Drosophila melanogaster (Fruit fly).